The sequence spans 482 residues: Retinoic acid receptor beta (482 aa).

Residues 1 to 114 (MSTSSHACPV…PLPPPRVYKP (114 aa)) are modulating. Ser-104 bears the Phosphoserine mark. 2 NR C4-type zinc fingers span residues 115–135 (CFVC…CEGC) and 151–175 (CHRD…LQKC). The segment at residues 115–180 (CFVCQDKSSG…RLQKCFEVGM (66 aa)) is a DNA-binding region (nuclear receptor). The hinge stretch occupies residues 181-209 (SKESVRNDRNKKKKEPSKQECTESYEMTA). The NR LBD domain maps to 210 to 444 (ELDDLTEKIR…PLIQEMLENS (235 aa)). Positions 443–482 (NSEGHEPLTPSSSGNIAEHSPSVSPSSVENSGVSQSPLLQ) are disordered. Residues 462-482 (SPSVSPSSVENSGVSQSPLLQ) show a composition bias toward low complexity.

This sequence belongs to the nuclear hormone receptor family. NR1 subfamily. In terms of assembly, homodimer. Heterodimer; with a RXR molecule. Binds DNA preferentially as a RAR/RXR heterodimer. Heterodimerizes (via NR LBD) with RXRA. Interacts weakly with NCOR2.

Its subcellular location is the nucleus. It localises to the cytoplasm. Receptor for retinoic acid. Retinoic acid receptors bind as heterodimers to their target response elements in response to their ligands, all-trans or 9-cis retinoic acid, and regulate gene expression in various biological processes. The RAR/RXR heterodimers bind to the retinoic acid response elements (RARE) composed of tandem 5'-AGGTCA-3' sites known as DR1-DR5. In the absence of ligand, acts mainly as an activator of gene expression due to weak binding to corepressors. The RXRA/RARB heterodimer can act as a repressor on the DR1 element and as an activator on the DR5 element. In concert with RARG, required for skeletal growth, matrix homeostasis and growth plate function. The polypeptide is Retinoic acid receptor beta (Rarb) (Mus musculus (Mouse)).